A 400-amino-acid polypeptide reads, in one-letter code: uncharacterized protein (400 aa).

It belongs to the mimivirus R640 family.

The protein resides in the virion. This is an uncharacterized protein from Acanthamoeba polyphaga (Amoeba).